Reading from the N-terminus, the 478-residue chain is Methylenetetrahydrofolate--tRNA-(uracil-5-)-methyltransferase TrmFO (478 aa).

16–21 contacts FAD; that stretch reads GAGLAG. The interval 429–448 is disordered; sequence PLANPPTKGPDGKRLRGPEK. Over residues 438 to 448 the composition is skewed to basic and acidic residues; sequence PDGKRLRGPEK.

Belongs to the MnmG family. TrmFO subfamily. It depends on FAD as a cofactor.

The protein localises to the cytoplasm. The enzyme catalyses uridine(54) in tRNA + (6R)-5,10-methylene-5,6,7,8-tetrahydrofolate + NADH + H(+) = 5-methyluridine(54) in tRNA + (6S)-5,6,7,8-tetrahydrofolate + NAD(+). It catalyses the reaction uridine(54) in tRNA + (6R)-5,10-methylene-5,6,7,8-tetrahydrofolate + NADPH + H(+) = 5-methyluridine(54) in tRNA + (6S)-5,6,7,8-tetrahydrofolate + NADP(+). In terms of biological role, catalyzes the folate-dependent formation of 5-methyl-uridine at position 54 (M-5-U54) in all tRNAs. The chain is Methylenetetrahydrofolate--tRNA-(uracil-5-)-methyltransferase TrmFO from Rhodopseudomonas palustris (strain ATCC BAA-98 / CGA009).